A 556-amino-acid chain; its full sequence is 2-succinyl-5-enolpyruvyl-6-hydroxy-3-cyclohexene-1-carboxylate synthase (556 aa).

Belongs to the TPP enzyme family. MenD subfamily. Homodimer. The cofactor is Mg(2+). Mn(2+) is required as a cofactor. Thiamine diphosphate serves as cofactor.

The catalysed reaction is isochorismate + 2-oxoglutarate + H(+) = 5-enolpyruvoyl-6-hydroxy-2-succinyl-cyclohex-3-ene-1-carboxylate + CO2. Its pathway is quinol/quinone metabolism; 1,4-dihydroxy-2-naphthoate biosynthesis; 1,4-dihydroxy-2-naphthoate from chorismate: step 2/7. The protein operates within quinol/quinone metabolism; menaquinone biosynthesis. In terms of biological role, catalyzes the thiamine diphosphate-dependent decarboxylation of 2-oxoglutarate and the subsequent addition of the resulting succinic semialdehyde-thiamine pyrophosphate anion to isochorismate to yield 2-succinyl-5-enolpyruvyl-6-hydroxy-3-cyclohexene-1-carboxylate (SEPHCHC). This is 2-succinyl-5-enolpyruvyl-6-hydroxy-3-cyclohexene-1-carboxylate synthase from Enterobacter sp. (strain 638).